The following is a 177-amino-acid chain: Large ribosomal subunit protein uL6 (177 aa).

It belongs to the universal ribosomal protein uL6 family. As to quaternary structure, part of the 50S ribosomal subunit.

This protein binds to the 23S rRNA, and is important in its secondary structure. It is located near the subunit interface in the base of the L7/L12 stalk, and near the tRNA binding site of the peptidyltransferase center. In Brucella abortus (strain S19), this protein is Large ribosomal subunit protein uL6.